Consider the following 161-residue polypeptide: TM2 domain-containing protein DDB_G0278163 (161 aa).

At 1 to 24 (MGHHHHHHGGSGHHHHHHHHGSGH) the chain is on the cytoplasmic side. Residues 25 to 45 (YGGGAVLVTPIVTPVPVVYGS) form a helical membrane-spanning segment. At 46–54 (RSSSYCPKS) the chain is on the extracellular side. In terms of domain architecture, TM2 spans 52–100 (PKSMTVAYVLWFFFGILGFHRLYLGRVGTFFLYFFTAGVFGLGWLFDAF). The chain crosses the membrane as a helical span at residues 55–75 (MTVAYVLWFFFGILGFHRLYL). Topologically, residues 76 to 80 (GRVGT) are cytoplasmic. A helical membrane pass occupies residues 81-101 (FFLYFFTAGVFGLGWLFDAFY). The Extracellular portion of the chain corresponds to 102 to 161 (THKMVKHYNECEFTKSCVGQSPPATIPIYQSEGAYPTYQQVPQQPPQFYQPQQQQPQYQP). Residues 139 to 161 (YQQVPQQPPQFYQPQQQQPQYQP) are disordered.

The protein belongs to the TM2 family.

The protein localises to the membrane. This Dictyostelium discoideum (Social amoeba) protein is TM2 domain-containing protein DDB_G0278163.